A 24-amino-acid chain; its full sequence is Brevinin-1Sa (24 aa).

The cysteines at positions 18 and 24 are disulfide-linked.

As to expression, expressed by the skin glands.

Its subcellular location is the secreted. In terms of biological role, antibacterial activity against Gram-negative bacterium E.coli. This chain is Brevinin-1Sa, found in Lithobates sphenocephalus (Southern leopard frog).